The following is a 901-amino-acid chain: Bifunctional protein STORR (901 aa).

The helical transmembrane segment at 12-32 (TSSVVALLLALVSILSSVVVL) threads the bilayer. Cys-513 provides a ligand contact to heme.

The protein in the N-terminal section; belongs to the cytochrome P450 family. In the C-terminal section; belongs to the aldo/keto reductase family. Heme serves as cofactor.

The protein localises to the membrane. The enzyme catalyses (R)-reticuline + NADP(+) = 1,2-dehydroreticuline + NADPH + H(+). It catalyses the reaction (S)-reticuline + reduced [NADPH--hemoprotein reductase] + O2 = 1,2-dehydroreticuline + oxidized [NADPH--hemoprotein reductase] + 2 H2O + H(+). Its pathway is alkaloid biosynthesis; morphine biosynthesis. Bifunctional protein involved in the biosynthesis of morphinan-type benzylisoquinoline alkaloids. Required for the isomerization of (S)- to (R)-reticuline. The cytochrome P450 module is responsible for the conversion of (S)-reticuline to 1,2-dehydroreticuline while the oxidoreductase module converts 1,2-dehydroreticuline to (R)-reticuline. The sequence is that of Bifunctional protein STORR from Papaver somniferum (Opium poppy).